The primary structure comprises 111 residues: uncharacterized protein (111 aa).

Residues 18-41 (FFYFFFISFYTLWIVFFLLHLSFF) form a helical membrane-spanning segment.

The protein localises to the membrane. This is an uncharacterized protein from Saccharomyces cerevisiae (strain ATCC 204508 / S288c) (Baker's yeast).